The primary structure comprises 1386 residues: Lysophospholipase NTE1 (1386 aa).

At 1-19 the chain is on the cytoplasmic side; it reads MGPEFEDSIPLVHSDNRTT. The helical transmembrane segment at 20-40 threads the bilayer; that stretch reads TIYSVYIIISDIFSFVQWLLF. The Lumenal portion of the chain corresponds to 41–65; that stretch reads KVLNLIIIDSPAFVLRLLSKNFEIN. Residues 66 to 86 traverse the membrane as a helical segment; sequence LHLSSILATLIGVSVVTYLVI. Residues 87–1386 lie on the Cytoplasmic side of the membrane; it reads RYKFLTGYSH…KKILYRRNSI (1300 aa). Residues 394–416 are disordered; sequence EAEAENLPKKLKHHHRNQLQRTT. The span at 402–411 shows a compositional bias: basic residues; it reads KKLKHHHRNQ. A nucleoside 3',5'-cyclic phosphate-binding positions include 577–701 and 697–821; these read KRLL…LKNL and KLKN…VASK. One can recognise a PNPLA domain in the interval 1081–1245; it reads LVLGGGGSRG…LDNLPVNEMK (165 aa). A GXGXXG motif is present at residues 1085–1090; sequence GGGSRG. The GXSXG signature appears at 1112–1116; that stretch reads GTSIG. Ser1114 serves as the catalytic Nucleophile. Asp1232 (proton acceptor) is an active-site residue. Residues 1232–1234 carry the DGA/G motif; the sequence is DGG.

This sequence belongs to the NTE family.

Its subcellular location is the endoplasmic reticulum membrane. The enzyme catalyses a 1-acyl-sn-glycero-3-phosphocholine + H2O = sn-glycerol 3-phosphocholine + a fatty acid + H(+). Inhibited by organophosphorus esters. Functionally, intracellular phospholipase B that catalyzes the double deacylation of phosphatidylcholine (PC) to glycerophosphocholine (GroPCho). Plays an important role in membrane lipid homeostasis. Responsible for the rapid PC turnover in response to inositol, elevated temperatures, or when choline is present in the growth medium. The sequence is that of Lysophospholipase NTE1 (NTE1) from Candida albicans (strain SC5314 / ATCC MYA-2876) (Yeast).